The chain runs to 137 residues: Phosphoribosyl-AMP cyclohydrolase (137 aa).

Asp-84 contacts Mg(2+). Cys-85 lines the Zn(2+) pocket. The Mg(2+) site is built by Asp-86 and Asp-88. Positions 101 and 108 each coordinate Zn(2+).

This sequence belongs to the PRA-CH family. In terms of assembly, homodimer. Mg(2+) is required as a cofactor. The cofactor is Zn(2+).

Its subcellular location is the cytoplasm. It carries out the reaction 1-(5-phospho-beta-D-ribosyl)-5'-AMP + H2O = 1-(5-phospho-beta-D-ribosyl)-5-[(5-phospho-beta-D-ribosylamino)methylideneamino]imidazole-4-carboxamide. It functions in the pathway amino-acid biosynthesis; L-histidine biosynthesis; L-histidine from 5-phospho-alpha-D-ribose 1-diphosphate: step 3/9. Catalyzes the hydrolysis of the adenine ring of phosphoribosyl-AMP. This Chlorobium limicola (strain DSM 245 / NBRC 103803 / 6330) protein is Phosphoribosyl-AMP cyclohydrolase.